The chain runs to 443 residues: Trigger factor (443 aa).

The 86-residue stretch at 161-246 (ADGVTITYHG…VISVTAPRLP (86 aa)) folds into the PPIase FKBP-type domain.

Belongs to the FKBP-type PPIase family. Tig subfamily.

The protein resides in the cytoplasm. The enzyme catalyses [protein]-peptidylproline (omega=180) = [protein]-peptidylproline (omega=0). In terms of biological role, involved in protein export. Acts as a chaperone by maintaining the newly synthesized protein in an open conformation. Functions as a peptidyl-prolyl cis-trans isomerase. The chain is Trigger factor from Nitrosococcus oceani (strain ATCC 19707 / BCRC 17464 / JCM 30415 / NCIMB 11848 / C-107).